The primary structure comprises 874 residues: Valine--tRNA ligase (874 aa).

The 'HIGH' region motif lies at 51-61; that stretch reads PNVTGVLHIGH. Positions 533-537 match the 'KMSKS' region motif; it reads KMSKS. Lys536 lines the ATP pocket. A coiled-coil region spans residues 813–873; the sequence is LVARLKKQLE…IKQELDLLEQ (61 aa).

The protein belongs to the class-I aminoacyl-tRNA synthetase family. ValS type 1 subfamily. Monomer.

The protein localises to the cytoplasm. It catalyses the reaction tRNA(Val) + L-valine + ATP = L-valyl-tRNA(Val) + AMP + diphosphate. In terms of biological role, catalyzes the attachment of valine to tRNA(Val). As ValRS can inadvertently accommodate and process structurally similar amino acids such as threonine, to avoid such errors, it has a 'posttransfer' editing activity that hydrolyzes mischarged Thr-tRNA(Val) in a tRNA-dependent manner. This Helicobacter pylori (strain ATCC 700392 / 26695) (Campylobacter pylori) protein is Valine--tRNA ligase.